The primary structure comprises 494 residues: Alpha-amylase-related protein (494 aa).

The signal sequence occupies residues 1-20; the sequence is MIKFALALTLCLAGASLSLA. Gln-21 is subject to Pyrrolidone carboxylic acid. A disulfide bond links Cys-48 and Cys-104. Ca(2+)-binding residues include Asn-118, Gln-169, and Asp-178. Cysteines 157 and 171 form a disulfide. Arg-206 serves as a coordination point for chloride. The active-site Nucleophile is Asp-208. His-212 lines the Ca(2+) pocket. Glu-245 (proton donor) is an active-site residue. Residues Asn-308 and Arg-343 each coordinate chloride. 3 disulfides stabilise this stretch: Cys-376–Cys-382, Cys-418–Cys-441, and Cys-448–Cys-460.

It belongs to the glycosyl hydrolase 13 family. As to quaternary structure, monomer. Ca(2+) serves as cofactor. Requires chloride as cofactor.

It is found in the secreted. It catalyses the reaction Endohydrolysis of (1-&gt;4)-alpha-D-glucosidic linkages in polysaccharides containing three or more (1-&gt;4)-alpha-linked D-glucose units.. In Drosophila auraria (Fruit fly), this protein is Alpha-amylase-related protein (Amyrel).